A 69-amino-acid polypeptide reads, in one-letter code: Light-harvesting polypeptide B-800/860 alpha chain (69 aa).

The Cytoplasmic portion of the chain corresponds to Met-1–Val-14. Residues Gly-15 to Phe-35 form a helical membrane-spanning segment. His-31 contributes to the a bacteriochlorophyll binding site. The Periplasmic portion of the chain corresponds to Val-36–Lys-69.

This sequence belongs to the antenna complex alpha subunit family. In terms of assembly, the core complex is formed by different alpha and beta chains, binding bacteriochlorophyll molecules, and arranged most probably in tetrameric structures disposed around the reaction center. The non-pigmented gamma chains may constitute additional components.

The protein localises to the cell inner membrane. Functionally, antenna complexes are light-harvesting systems, which transfer the excitation energy to the reaction centers. The protein is Light-harvesting polypeptide B-800/860 alpha chain of Rhodocyclus tenuis (Rhodospirillum tenue).